We begin with the raw amino-acid sequence, 647 residues long: DNA mismatch repair protein MutL (647 aa).

This sequence belongs to the DNA mismatch repair MutL/HexB family.

In terms of biological role, this protein is involved in the repair of mismatches in DNA. It is required for dam-dependent methyl-directed DNA mismatch repair. May act as a 'molecular matchmaker', a protein that promotes the formation of a stable complex between two or more DNA-binding proteins in an ATP-dependent manner without itself being part of a final effector complex. This chain is DNA mismatch repair protein MutL, found in Bacillus cereus (strain 03BB102).